The following is a 315-amino-acid chain: Ninja-family protein 1 (315 aa).

3 disordered regions span residues 1–28 (MASR…AGEA), 68–142 (SLPG…AQEP), and 156–237 (DQGN…TGDL). The segment covering 99-108 (ERWRRREMQS) has biased composition (basic and acidic residues). Over residues 156–166 (DQGNPSSSMPE) the composition is skewed to polar residues. Low complexity-rich tracts occupy residues 184-197 (SSDN…QNKS) and 221-234 (LRTL…TTST).

It belongs to the Ninja family.

The protein localises to the nucleus. This chain is Ninja-family protein 1 (AFP-A1), found in Triticum aestivum (Wheat).